The sequence spans 37 residues: Mu-agatoxin-Aa1b (37 aa).

4 disulfides stabilise this stretch: Cys-2-Cys-18, Cys-9-Cys-23, Cys-17-Cys-33, and Cys-25-Cys-31. Position 37 is a serine amide (Ser-37).

Belongs to the neurotoxin 07 (Beta/delta-agtx) family. 01 (aga-2) subfamily. Expressed by the venom gland.

The protein localises to the secreted. Insecticidal neurotoxin that induces an irreversible spastic paralysis when injected into insects. Modifies presynaptic voltage-gated sodium channels (Nav), causing them to open at the normal resting potential of the nerve. This leads to spontaneous release of neurotransmitter and repetitive action potentials in motor neurons. The protein is Mu-agatoxin-Aa1b of Agelenopsis aperta (North American funnel-web spider).